The chain runs to 382 residues: Flavin-dependent monooxygenase, oxygenase subunit HsaA (382 aa).

Residues tryptophan 72, 106–108 (SSY), 129–131 (WSS), arginine 251, 334–335 (AT), and 356–357 (HA) each bind FMN.

Belongs to the HpaH/HsaA monooxygenase family. As to quaternary structure, homotetramer. HsaAB monooxygenase consists of an oxygenase component HsaA and a reductase component HsaB.

The enzyme catalyses 3-hydroxy-9,10-secoandrosta-1,3,5(10)-triene-9,17-dione + FMNH2 + O2 = 3,4-dihydroxy-9,10-secoandrosta-1,3,5(10)-triene-9,17-dione + FMN + H2O + H(+). It functions in the pathway lipid metabolism; steroid biosynthesis. In terms of biological role, catalyzes the o-hydroxylation of 3-hydroxy-9,10-secoandrosta-1,3,5(10)-triene-9,17-dione (3-HSA) to 3,4-dihydroxy-9,10-secoandrosta-1,3,5(10)-triene-9,17-dione (3,4-DHSA) in the catabolism of cholesterol. In Rhodococcus jostii (strain RHA1), this protein is Flavin-dependent monooxygenase, oxygenase subunit HsaA (hsaA).